We begin with the raw amino-acid sequence, 1613 residues long: Myosin-IIIa (1613 aa).

Residues 21–287 enclose the Protein kinase domain; it reads WEIIETIGKG…VSDLLKHKFI (267 aa). ATP is bound by residues 27–35 and K50; that span reads IGKGTYGKV. D150 acts as the Proton acceptor in catalysis. The Myosin motor domain occupies 338-1052; sequence KDVDDLATLD…HVEQLNLMRK (715 aa). Positions 933-955 are actin-binding; it reads LMDLLSKMVVGQPHFVRCIKPNN. IQ domains lie at 1054 to 1083 and 1081 to 1110; these read ATNKLVLIQASVRAFLGARRYQELQQKRKS and RKSSAVIIQSAARGHLVRKQRKEIVDMKNT. 2 disordered regions span residues 1136–1168 and 1476–1506; these read VKKQTENAVPTNESNTSTPNNKESPSAGKTAPF and SGVSKGEEPKILRPPRRPRKPKTLNNPEDST. Over residues 1145–1161 the composition is skewed to low complexity; that stretch reads PTNESNTSTPNNKESPS. An interaction with MORN4 region spans residues 1398-1476; the sequence is EGVHHSKMVD…RHVSTHQYLS (79 aa). Residues 1488–1497 show a composition bias toward basic residues; it reads RPPRRPRKPK.

The protein in the C-terminal section; belongs to the TRAFAC class myosin-kinesin ATPase superfamily. Myosin family. It in the N-terminal section; belongs to the protein kinase superfamily. STE Ser/Thr protein kinase family. Interacts with MORN4. Interacts (via C-terminus) with ESPN and ESPNL. In terms of tissue distribution, expressed in the cochlear hair cells (at protein level). Expressed in utricle hair bundles (at protein level).

Its subcellular location is the cytoplasm. It localises to the cytoskeleton. The protein localises to the cell projection. It is found in the filopodium tip. The protein resides in the stereocilium. It carries out the reaction L-seryl-[protein] + ATP = O-phospho-L-seryl-[protein] + ADP + H(+). The catalysed reaction is L-threonyl-[protein] + ATP = O-phospho-L-threonyl-[protein] + ADP + H(+). It catalyses the reaction ATP + H2O = ADP + phosphate + H(+). Functionally, actin-dependent motor protein with a protein kinase activity, playing an essential role in hearing. Probably plays also a role in vision. Required for normal cochlear hair bundle development and hearing. Plays an important role in the early steps of cochlear hair bundle morphogenesis. Influences the number and lengths of stereocilia to be produced and limits the growth of microvilli within the forming auditory hair bundles thereby contributing to the architecture of the hair bundle, including its staircase pattern. Involved in the elongation of actin in stereocilia tips by transporting the actin regulatory factor ESPN to the plus ends of actin filaments. In Mus musculus (Mouse), this protein is Myosin-IIIa (Myo3a).